The chain runs to 487 residues: Cysteine--tRNA ligase (487 aa).

Zn(2+) is bound at residue Cys29. The 'HIGH' region motif lies at 31-41 (VTVYDFCHIGH). Positions 209, 234, and 238 each coordinate Zn(2+). The 'KMSKS' region signature appears at 266-270 (KMSKS). Lys269 contacts ATP.

This sequence belongs to the class-I aminoacyl-tRNA synthetase family. In terms of assembly, monomer. It depends on Zn(2+) as a cofactor.

It localises to the cytoplasm. The enzyme catalyses tRNA(Cys) + L-cysteine + ATP = L-cysteinyl-tRNA(Cys) + AMP + diphosphate. The sequence is that of Cysteine--tRNA ligase from Trichlorobacter lovleyi (strain ATCC BAA-1151 / DSM 17278 / SZ) (Geobacter lovleyi).